The sequence spans 509 residues: ATP synthase subunit alpha (509 aa).

Residue 169 to 176 (GDRQTGKT) participates in ATP binding.

It belongs to the ATPase alpha/beta chains family. As to quaternary structure, F-type ATPases have 2 components, CF(1) - the catalytic core - and CF(0) - the membrane proton channel. CF(1) has five subunits: alpha(3), beta(3), gamma(1), delta(1), epsilon(1). CF(0) has three main subunits: a(1), b(2) and c(9-12). The alpha and beta chains form an alternating ring which encloses part of the gamma chain. CF(1) is attached to CF(0) by a central stalk formed by the gamma and epsilon chains, while a peripheral stalk is formed by the delta and b chains.

It is found in the cell inner membrane. It carries out the reaction ATP + H2O + 4 H(+)(in) = ADP + phosphate + 5 H(+)(out). In terms of biological role, produces ATP from ADP in the presence of a proton gradient across the membrane. The alpha chain is a regulatory subunit. In Brucella canis (strain ATCC 23365 / NCTC 10854 / RM-666), this protein is ATP synthase subunit alpha.